Consider the following 418-residue polypeptide: Gamma-glutamyl phosphate reductase (418 aa).

Belongs to the gamma-glutamyl phosphate reductase family.

Its subcellular location is the cytoplasm. The catalysed reaction is L-glutamate 5-semialdehyde + phosphate + NADP(+) = L-glutamyl 5-phosphate + NADPH + H(+). It participates in amino-acid biosynthesis; L-proline biosynthesis; L-glutamate 5-semialdehyde from L-glutamate: step 2/2. Its function is as follows. Catalyzes the NADPH-dependent reduction of L-glutamate 5-phosphate into L-glutamate 5-semialdehyde and phosphate. The product spontaneously undergoes cyclization to form 1-pyrroline-5-carboxylate. This Clostridium kluyveri (strain NBRC 12016) protein is Gamma-glutamyl phosphate reductase.